The following is a 431-amino-acid chain: Trigger factor (431 aa).

In terms of domain architecture, PPIase FKBP-type spans 158-243 (GDLVAVETWS…VAEVSEPVVP (86 aa)).

This sequence belongs to the FKBP-type PPIase family. Tig subfamily.

It is found in the cytoplasm. It carries out the reaction [protein]-peptidylproline (omega=180) = [protein]-peptidylproline (omega=0). Involved in protein export. Acts as a chaperone by maintaining the newly synthesized protein in an open conformation. Functions as a peptidyl-prolyl cis-trans isomerase. The polypeptide is Trigger factor (Stenotrophomonas maltophilia (strain K279a)).